The chain runs to 280 residues: Undecaprenyl-diphosphatase (280 aa).

7 helical membrane passes run 1–21 (MTLLQALILAIVQGITEPFPV), 45–65 (FLPFLTMLHVGTLVALAGVFW), 90–110 (IFGLLVIATIPAVLVGWLLEH), 115–135 (VFGTPLAVAGFLILNGFLLMV), 151–171 (IATLAPKDAVIIGIWQCLALL), 226–246 (IMVQCVAGAVVAGLTALICSL), and 260–280 (LTPFGVYCVLAGLFAGAVILL).

This sequence belongs to the UppP family.

The protein resides in the cell inner membrane. It carries out the reaction di-trans,octa-cis-undecaprenyl diphosphate + H2O = di-trans,octa-cis-undecaprenyl phosphate + phosphate + H(+). Catalyzes the dephosphorylation of undecaprenyl diphosphate (UPP). Confers resistance to bacitracin. The polypeptide is Undecaprenyl-diphosphatase (Gluconobacter oxydans (strain 621H) (Gluconobacter suboxydans)).